The primary structure comprises 166 residues: MASGVTVNDEVIKVFNDMKVRKSSTPEEIKKRKKAVLFCLSDDKKQIIVEEAKQILVGDIGDTVEDPYTAFVKLLPLNDCRYALYDATYETKESKKEDLVFIFWAPESAPLKSKMIYASSKDAIKKKFTGIKHEWQVNGLDDIKDRSTLGEKLGGNVVVSLEGKPL.

Residues 4-153 (GVTVNDEVIK…KDRSTLGEKL (150 aa)) enclose the ADF-H domain. S24 is subject to Phosphoserine. A Nuclear localization signal motif is present at residues 30 to 34 (KKRKK).

Belongs to the actin-binding proteins ADF family. The phosphorylation of Ser-24 may prevent recognition of the nuclear localization signal. Widely distributed in various tissues.

Its subcellular location is the nucleus matrix. It is found in the cytoplasm. The protein localises to the cytoskeleton. Functionally, controls reversibly actin polymerization and depolymerization in a pH-sensitive manner. It has the ability to bind G- and F-actin in a 1:1 ratio of cofilin to actin. It is the major component of intranuclear and cytoplasmic actin rods. The protein is Cofilin-2 (CFL2) of Gallus gallus (Chicken).